The following is a 292-amino-acid chain: Probable septum site-determining protein MinC (292 aa).

The tract at residues 109–188 is disordered; that stretch reads QVIDTAPPND…PQSSSALVIT (80 aa). The span at 140–150 shows a compositional bias: acidic residues; the sequence is QDDEADGEQAD. The segment covering 171 to 185 has biased composition (polar residues); that stretch reads ANRPTATPPQSSSAL.

The protein belongs to the MinC family. As to quaternary structure, interacts with MinD and FtsZ.

Functionally, cell division inhibitor that blocks the formation of polar Z ring septums. Rapidly oscillates between the poles of the cell to destabilize FtsZ filaments that have formed before they mature into polar Z rings. Prevents FtsZ polymerization. The sequence is that of Probable septum site-determining protein MinC from Bordetella pertussis (strain Tohama I / ATCC BAA-589 / NCTC 13251).